Here is a 215-residue protein sequence, read N- to C-terminus: Thymidylate kinase (215 aa).

Position 11-18 (11-18 (GIDGAGKS)) interacts with ATP.

This sequence belongs to the thymidylate kinase family.

The enzyme catalyses dTMP + ATP = dTDP + ADP. Functionally, phosphorylation of dTMP to form dTDP in both de novo and salvage pathways of dTTP synthesis. This chain is Thymidylate kinase, found in Nitrosomonas europaea (strain ATCC 19718 / CIP 103999 / KCTC 2705 / NBRC 14298).